The following is a 318-amino-acid chain: MSKRVRERSVVSDETAKRIRQNEHCHAKNESFLGFCNLEEIDYYQCLKMQYVPDQKFDNDFILTVYRMANVVTKQVRPYNSIDEKHHYNTVRNVLILIKNARLVLSNSVKKQYYDDVLKLKKNTDLESYDPLITVFLQIGESVNEEIQKLRKALVNIFTNKPDKSDINNPDVVSYQFIFGRVQKLYNRAIKQKTKTIIVKRPTTMNRIQIDWKTLSEDEQKMTRQEIAEKIVKPCFEQFGTILHIYVCPLKHNRIIVEYANSESVQKAMTVNDDTRFTVTEFSVVQYYNVAKTEMVNQRIDIISKDIEDLRNALKSYT.

This is an uncharacterized protein from Autographa californica nuclear polyhedrosis virus (AcMNPV).